The primary structure comprises 303 residues: UDP-3-O-acyl-N-acetylglucosamine deacetylase (303 aa).

Residues His-78, His-237, and Asp-241 each contribute to the Zn(2+) site. His-264 acts as the Proton donor in catalysis.

Belongs to the LpxC family. Zn(2+) serves as cofactor.

It catalyses the reaction a UDP-3-O-[(3R)-3-hydroxyacyl]-N-acetyl-alpha-D-glucosamine + H2O = a UDP-3-O-[(3R)-3-hydroxyacyl]-alpha-D-glucosamine + acetate. It functions in the pathway glycolipid biosynthesis; lipid IV(A) biosynthesis; lipid IV(A) from (3R)-3-hydroxytetradecanoyl-[acyl-carrier-protein] and UDP-N-acetyl-alpha-D-glucosamine: step 2/6. Catalyzes the hydrolysis of UDP-3-O-myristoyl-N-acetylglucosamine to form UDP-3-O-myristoylglucosamine and acetate, the committed step in lipid A biosynthesis. The chain is UDP-3-O-acyl-N-acetylglucosamine deacetylase from Coxiella burnetii (strain CbuK_Q154) (Coxiella burnetii (strain Q154)).